We begin with the raw amino-acid sequence, 152 residues long: Ribosome maturation factor RimP (152 aa).

It belongs to the RimP family.

The protein localises to the cytoplasm. Its function is as follows. Required for maturation of 30S ribosomal subunits. This Photorhabdus laumondii subsp. laumondii (strain DSM 15139 / CIP 105565 / TT01) (Photorhabdus luminescens subsp. laumondii) protein is Ribosome maturation factor RimP.